The following is a 561-amino-acid chain: Urocanate hydratase (561 aa).

NAD(+) is bound by residues G52–G53, Q130, G176–G178, E196, R201, N242–A243, Q263–H267, Y273–L274, and Y322. C410 is an active-site residue. Position 492 (G492) interacts with NAD(+).

It belongs to the urocanase family. It depends on NAD(+) as a cofactor.

Its subcellular location is the cytoplasm. The catalysed reaction is 4-imidazolone-5-propanoate = trans-urocanate + H2O. It functions in the pathway amino-acid degradation; L-histidine degradation into L-glutamate; N-formimidoyl-L-glutamate from L-histidine: step 2/3. Functionally, catalyzes the conversion of urocanate to 4-imidazolone-5-propionate. The protein is Urocanate hydratase of Salmonella newport (strain SL254).